The primary structure comprises 94 residues: Co-chaperonin GroES (94 aa).

This sequence belongs to the GroES chaperonin family. As to quaternary structure, heptamer of 7 subunits arranged in a ring. Interacts with the chaperonin GroEL.

It is found in the cytoplasm. In terms of biological role, together with the chaperonin GroEL, plays an essential role in assisting protein folding. The GroEL-GroES system forms a nano-cage that allows encapsulation of the non-native substrate proteins and provides a physical environment optimized to promote and accelerate protein folding. GroES binds to the apical surface of the GroEL ring, thereby capping the opening of the GroEL channel. The protein is Co-chaperonin GroES of Streptococcus pneumoniae (strain ATCC BAA-255 / R6).